A 21-amino-acid polypeptide reads, in one-letter code: Nigrocin-2GRb (21 aa).

Expressed by the skin glands.

The protein resides in the secreted. In terms of biological role, antimicrobial peptide active against the Gram-positive bacterium S.aureus (MIC=12.5 uM) and against the Gram-negative bacteria E.coli (MIC=3 uM). Has antifungal activity against C.albicans (MIC=50 uM). Has some hemolytic activity against human erythrocytes (LC(50)=40 uM). This is Nigrocin-2GRb from Odorrana grahami (Yunnanfu frog).